Consider the following 74-residue polypeptide: DNA-directed RNA polymerase subunit omega (74 aa).

The protein belongs to the RNA polymerase subunit omega family. As to quaternary structure, the RNAP catalytic core consists of 2 alpha, 1 beta, 1 beta' and 1 omega subunit. When a sigma factor is associated with the core the holoenzyme is formed, which can initiate transcription.

It catalyses the reaction RNA(n) + a ribonucleoside 5'-triphosphate = RNA(n+1) + diphosphate. Its function is as follows. Promotes RNA polymerase assembly. Latches the N- and C-terminal regions of the beta' subunit thereby facilitating its interaction with the beta and alpha subunits. This chain is DNA-directed RNA polymerase subunit omega, found in Campylobacter jejuni subsp. jejuni serotype O:6 (strain 81116 / NCTC 11828).